The sequence spans 382 residues: Type 2 DNA topoisomerase 6 subunit A (382 aa).

The Topo IIA-type catalytic domain occupies 14–155 (YDPQKVLKKL…MHITADRRGY (142 aa)). The O-(5'-phospho-DNA)-tyrosine intermediate role is filled by Tyr108. The Mg(2+) site is built by Glu202 and Asp254.

Belongs to the TOP6A family. As to quaternary structure, homodimer. Heterotetramer of two Top6A and two Top6B chains. The cofactor is Mg(2+).

It catalyses the reaction ATP-dependent breakage, passage and rejoining of double-stranded DNA.. In terms of biological role, relaxes both positive and negative superturns and exhibits a strong decatenase activity. The polypeptide is Type 2 DNA topoisomerase 6 subunit A (Pyrococcus horikoshii (strain ATCC 700860 / DSM 12428 / JCM 9974 / NBRC 100139 / OT-3)).